An 84-amino-acid polypeptide reads, in one-letter code: Anaphase-promoting complex subunit 11 (84 aa).

Residues 34–77 (CPDCKLPGDDCPLIWGACNHAFHLHCILKWVNSQTSQAHCPMCR) form an RING-type; atypical zinc finger.

The protein belongs to the RING-box family. As to quaternary structure, part of the APC/C complex composed of at least 10 subunits. Interacts with APC2.

Its subcellular location is the cytoplasm. It is found in the nucleus. It participates in protein modification; protein ubiquitination. In terms of biological role, component of the anaphase promoting complex/cyclosome (APC/C), a cell cycle-regulated E3 ubiquitin-protein ligase complex that controls progression through mitosis and the G1 phase of the cell cycle. The APC/C complex controls several key steps in the cell cycle by mediating ubiquitination and subsequent degradation of target proteins such as cyclins. The APC/C complex is required for the female gametophyte development and is involved in several aspect of development by controlling cell division and cell elongation. Involved in the control of endoreduplication. May recruit the E2 ubiquitin-conjugating enzymes to the complex. The polypeptide is Anaphase-promoting complex subunit 11 (Arabidopsis thaliana (Mouse-ear cress)).